The following is a 100-amino-acid chain: ATP-dependent Clp protease adapter protein ClpS (100 aa).

The protein belongs to the ClpS family. Binds to the N-terminal domain of the chaperone ClpA.

Functionally, involved in the modulation of the specificity of the ClpAP-mediated ATP-dependent protein degradation. The protein is ATP-dependent Clp protease adapter protein ClpS of Corynebacterium glutamicum (strain R).